The primary structure comprises 885 residues: Alanine--tRNA ligase (885 aa).

Positions 574, 578, 676, and 680 each coordinate Zn(2+).

This sequence belongs to the class-II aminoacyl-tRNA synthetase family. It depends on Zn(2+) as a cofactor.

It localises to the cytoplasm. It carries out the reaction tRNA(Ala) + L-alanine + ATP = L-alanyl-tRNA(Ala) + AMP + diphosphate. Functionally, catalyzes the attachment of alanine to tRNA(Ala) in a two-step reaction: alanine is first activated by ATP to form Ala-AMP and then transferred to the acceptor end of tRNA(Ala). Also edits incorrectly charged Ser-tRNA(Ala) and Gly-tRNA(Ala) via its editing domain. This Syntrophobacter fumaroxidans (strain DSM 10017 / MPOB) protein is Alanine--tRNA ligase.